A 275-amino-acid chain; its full sequence is Formamidopyrimidine-DNA glycosylase (275 aa).

The active-site Schiff-base intermediate with DNA is the P2. The active-site Proton donor is the E3. Residue K60 is the Proton donor; for beta-elimination activity of the active site. The DNA site is built by H93 and R112. Residues 240 to 274 (FVYGRKDEPCKKCGSPIEKTVVGGRGTHFCIKCQK) form an FPG-type zinc finger. R264 serves as the catalytic Proton donor; for delta-elimination activity.

The protein belongs to the FPG family. As to quaternary structure, monomer. Zn(2+) serves as cofactor.

It catalyses the reaction Hydrolysis of DNA containing ring-opened 7-methylguanine residues, releasing 2,6-diamino-4-hydroxy-5-(N-methyl)formamidopyrimidine.. The catalysed reaction is 2'-deoxyribonucleotide-(2'-deoxyribose 5'-phosphate)-2'-deoxyribonucleotide-DNA = a 3'-end 2'-deoxyribonucleotide-(2,3-dehydro-2,3-deoxyribose 5'-phosphate)-DNA + a 5'-end 5'-phospho-2'-deoxyribonucleoside-DNA + H(+). Functionally, involved in base excision repair of DNA damaged by oxidation or by mutagenic agents. Acts as a DNA glycosylase that recognizes and removes damaged bases. Has a preference for oxidized purines, such as 7,8-dihydro-8-oxoguanine (8-oxoG). Has AP (apurinic/apyrimidinic) lyase activity and introduces nicks in the DNA strand. Cleaves the DNA backbone by beta-delta elimination to generate a single-strand break at the site of the removed base with both 3'- and 5'-phosphates. This Bacillus licheniformis (strain ATCC 14580 / DSM 13 / JCM 2505 / CCUG 7422 / NBRC 12200 / NCIMB 9375 / NCTC 10341 / NRRL NRS-1264 / Gibson 46) protein is Formamidopyrimidine-DNA glycosylase.